Consider the following 1057-residue polypeptide: Exportin-1 (1057 aa).

The 67-residue stretch at 36–102 (AQMVLGKFQE…KNYIVSLIIR (67 aa)) folds into the Importin N-terminal domain. HEAT repeat units lie at residues 239 to 275 (AEPS…LNLG), 281 to 321 (AVFI…FIHT), 462 to 501 (NTQH…AQNK), 506 to 544 (RFLV…QYPR), 551 to 588 (KFLK…QCKR), 596 to 633 (EESQ…YMIA), 739 to 776 (KETL…DYRT), 781 to 818 (TRDP…TTLS), 855 to 892 (QQFK…NVSK), 902 to 925 (KTYL…KSGF), and 926 to 965 (ALEC…YVKE).

Belongs to the exportin family. As to quaternary structure, component of a nuclear export receptor complex.

It is found in the nucleus. The protein localises to the cytoplasm. The protein resides in the perinuclear region. Mediates the nuclear export of cellular proteins (cargos) bearing a leucine-rich nuclear export signal (NES). This chain is Exportin-1 (xpo1), found in Dictyostelium discoideum (Social amoeba).